Reading from the N-terminus, the 701-residue chain is Elongation factor G (701 aa).

The tr-type G domain maps to 8 to 286 (ERIRNIGIIA…AVVYYLPSPV (279 aa)). Residues 17-24 (AHIDAGKT), 85-89 (DTPGH), and 139-142 (NKMD) contribute to the GTP site.

The protein belongs to the TRAFAC class translation factor GTPase superfamily. Classic translation factor GTPase family. EF-G/EF-2 subfamily.

It localises to the cytoplasm. Catalyzes the GTP-dependent ribosomal translocation step during translation elongation. During this step, the ribosome changes from the pre-translocational (PRE) to the post-translocational (POST) state as the newly formed A-site-bound peptidyl-tRNA and P-site-bound deacylated tRNA move to the P and E sites, respectively. Catalyzes the coordinated movement of the two tRNA molecules, the mRNA and conformational changes in the ribosome. The polypeptide is Elongation factor G (Roseiflexus castenholzii (strain DSM 13941 / HLO8)).